The sequence spans 189 residues: Translation initiation factor IF-3 (189 aa).

It belongs to the IF-3 family. In terms of assembly, monomer.

It is found in the cytoplasm. Functionally, IF-3 binds to the 30S ribosomal subunit and shifts the equilibrium between 70S ribosomes and their 50S and 30S subunits in favor of the free subunits, thus enhancing the availability of 30S subunits on which protein synthesis initiation begins. The polypeptide is Translation initiation factor IF-3 (Corynebacterium glutamicum (strain R)).